A 149-amino-acid polypeptide reads, in one-letter code: Large ribosomal subunit protein uL15 (149 aa).

The disordered stretch occupies residues 1–54 (MSLKLHNLKPTPNSRPEKHRKGRGHAAGKGKQAGKGQSGQNKRKGHRLGFEGGQ). The span at 17–28 (EKHRKGRGHAAG) shows a compositional bias: basic residues.

Belongs to the universal ribosomal protein uL15 family. In terms of assembly, part of the 50S ribosomal subunit.

Its function is as follows. Binds to the 23S rRNA. The chain is Large ribosomal subunit protein uL15 from Mycoplasmopsis synoviae (strain 53) (Mycoplasma synoviae).